The sequence spans 151 residues: Deoxyuridine 5'-triphosphate nucleotidohydrolase (151 aa).

Residues 70–72 (RSG), Asn-83, 87–89 (LID), and Met-97 each bind substrate.

It belongs to the dUTPase family. In terms of assembly, homotrimer. Requires Mg(2+) as cofactor.

It carries out the reaction dUTP + H2O = dUMP + diphosphate + H(+). Its pathway is pyrimidine metabolism; dUMP biosynthesis; dUMP from dCTP (dUTP route): step 2/2. In terms of biological role, this enzyme is involved in nucleotide metabolism: it produces dUMP, the immediate precursor of thymidine nucleotides and it decreases the intracellular concentration of dUTP so that uracil cannot be incorporated into DNA. This chain is Deoxyuridine 5'-triphosphate nucleotidohydrolase, found in Escherichia coli O7:K1 (strain IAI39 / ExPEC).